The primary structure comprises 292 residues: Expansin-like protein 6 (292 aa).

The first 24 residues, Met1–Ala24, serve as a signal peptide directing secretion. Over Asp25–Leu267 the chain is Extracellular. Residues His47–Asn150 form the Expansin-like EG45 domain. Disulfide bonds link Cys50-Cys80 and Cys83-Cys145. An N-linked (GlcNAc...) asparagine glycan is attached at Asn92. The helical transmembrane segment at Pro268–Phe288 threads the bilayer. The Cytoplasmic segment spans residues Ser289–Tyr292.

This sequence belongs to the expansin family. Expansin A subfamily.

It is found in the membrane. In terms of biological role, may serve to lubricate the movement of the cellulose microfibrils during cell growth and wall extension and/or may serve to maintain the fluid state of the slug cell wall. In Dictyostelium discoideum (Social amoeba), this protein is Expansin-like protein 6 (expl6).